An 891-amino-acid polypeptide reads, in one-letter code: DNA mismatch repair protein MutS (891 aa).

646-653 provides a ligand contact to ATP; that stretch reads GPNMAGKS.

The protein belongs to the DNA mismatch repair MutS family.

This protein is involved in the repair of mismatches in DNA. It is possible that it carries out the mismatch recognition step. This protein has a weak ATPase activity. The protein is DNA mismatch repair protein MutS of Rickettsia canadensis (strain McKiel).